A 235-amino-acid polypeptide reads, in one-letter code: Small ribosomal subunit protein uS2 (235 aa).

The protein belongs to the universal ribosomal protein uS2 family.

The polypeptide is Small ribosomal subunit protein uS2 (Geobacillus sp. (strain WCH70)).